The sequence spans 215 residues: L-fuculose phosphate aldolase (215 aa).

Substrate is bound by residues 28 to 29 (GN), 43 to 44 (TG), and 71 to 72 (SS). Residue Glu-73 is the Proton donor/acceptor of the active site. Zn(2+)-binding residues include Glu-73, His-92, His-94, and His-155.

It belongs to the aldolase class II family. AraD/FucA subfamily. As to quaternary structure, homotetramer. The cofactor is Zn(2+).

It carries out the reaction L-fuculose 1-phosphate = (S)-lactaldehyde + dihydroxyacetone phosphate. The protein operates within carbohydrate degradation; L-fucose degradation; L-lactaldehyde and glycerone phosphate from L-fucose: step 3/3. With respect to regulation, inhibited by phosphoglycolohydroxamate (PGH). Its function is as follows. Involved in the degradation of L-fucose and D-arabinose. Catalyzes the reversible cleavage of L-fuculose 1-phosphate (Fuc1P) to yield dihydroxyacetone phosphate (DHAP) and L-lactaldehyde. Also able to catalyze the reversible cleavage of D-ribulose 1-phosphate, but FucA has a higher affinity for L-fuculose 1-phosphate and L-lactaldehyde than for D-ribulose 1-phosphate and glycolaldehyde, respectively. FucA possesses a high specificity for the dihydroxyacetone phosphate (DHAP), but accepts a great variety of different aldehydes and has a strong preference for L-configurated alpha-hydroxy aldehydes. FucA generates a vicinal diol unit having the absolute (3R,4R)-cis configuration (D-erythro). This Escherichia coli (strain K12) protein is L-fuculose phosphate aldolase.